Consider the following 483-residue polypeptide: MLTLDTLNTMLAVSEEGMVEEMILALLASPQLVIFFEKFPRLKNAVTADLPRWREALRSRLKDARVPPELTEEVMCYQQSQLLSTPQFIVQLPQILALLHRLHSPYAAQAKQLTESNSTFTPALHTLFLQRWRLSLVVQATTLNQQLLEEEREQLLSDVQERMTLSGQLEPTLAENDNAAGRLWDMSTGQLKRGDYQLIVKYGEFLAAQPELMQLAEQLGRSREAKSVPKKDAPMETFRTLVREPATVPEQVDGIQQGDDILRLLPPELAALGITELEYEFYRRLVEKQLLTYRLHGEAWREKVTERPVVHQDVDEQPRGPFIVCVDTSGSMGGFNEQCAKAFCLALMRVALADNRRCFIMLFSTDVVRYELSGPEGIEQAIRFLSQRFRGGTDIASCFRAIIERMQGREWFDADAVVISDFIAQRLPDDVVSKVGELQRLHQHRFHAVAMSAHGKPGIMRIFDHIWRFDTGMRSRLLRRWRR.

It belongs to the ViaA family. As to quaternary structure, homodimer. Interacts with RavA.

The protein resides in the cytoplasm. Component of the RavA-ViaA chaperone complex, which may act on the membrane to optimize the function of some of the respiratory chains. ViaA stimulates the ATPase activity of RavA. The sequence is that of Regulatory protein ViaA from Salmonella choleraesuis (strain SC-B67).